A 388-amino-acid chain; its full sequence is G2/mitotic-specific cyclin-B2 (388 aa).

Residues 46 to 67 are disordered; that stretch reads ATNGKVGPSKKPSKASCVQKPK.

This sequence belongs to the cyclin family. Cyclin AB subfamily. As to quaternary structure, interacts with the CDK1 protein kinase to form a serine/threonine kinase holoenzyme complex also known as maturation promoting factor (MPF). The cyclin subunit imparts substrate specificity to the complex.

In terms of biological role, essential for the control of the cell cycle at the G2/M (mitosis) transition. The sequence is that of G2/mitotic-specific cyclin-B2 (ccnb2) from Oryzias curvinotus (Hynann ricefish).